The following is a 41-amino-acid chain: Large ribosomal subunit protein bL32c (41 aa).

The protein belongs to the bacterial ribosomal protein bL32 family.

It is found in the plastid. In Helicosporidium sp. subsp. Simulium jonesii (Green alga), this protein is Large ribosomal subunit protein bL32c (rpl32).